The primary structure comprises 444 residues: C4-dicarboxylate transport protein (444 aa).

Helical transmembrane passes span 18–40, 53–75, 90–112, 142–159, 163–180, 201–222, 232–254, 327–349, and 364–386; these read FYSH…GHFY, AFIK…TGIA, AMLY…ANVV, IVGF…GAFA, ILQV…LAMV, LVAI…FTIG, LAML…LGAV, LFIA…LLVA, and FITL…ALIL.

Belongs to the dicarboxylate/amino acid:cation symporter (DAACS) (TC 2.A.23) family.

It localises to the cell inner membrane. Responsible for the transport of dicarboxylates such as succinate, fumarate, and malate from the periplasm across the inner membrane. This transport system plays an important role in the energy supply of rhizobium-legume symbionts. The chain is C4-dicarboxylate transport protein (dctA) from Rhizobium leguminosarum.